The chain runs to 141 residues: Large ribosomal subunit protein uL11 (141 aa).

Belongs to the universal ribosomal protein uL11 family. Part of the ribosomal stalk of the 50S ribosomal subunit. Interacts with L10 and the large rRNA to form the base of the stalk. L10 forms an elongated spine to which L12 dimers bind in a sequential fashion forming a multimeric L10(L12)X complex. Post-translationally, one or more lysine residues are methylated.

Forms part of the ribosomal stalk which helps the ribosome interact with GTP-bound translation factors. This is Large ribosomal subunit protein uL11 from Prochlorococcus marinus (strain MIT 9313).